The primary structure comprises 368 residues: tRNA(Met) cytidine acetate ligase (368 aa).

Residues 7-20 (IAEF…HKYL), G96, N152, and R175 each bind ATP.

The protein belongs to the TmcAL family.

It localises to the cytoplasm. The enzyme catalyses cytidine(34) in elongator tRNA(Met) + acetate + ATP = N(4)-acetylcytidine(34) in elongator tRNA(Met) + AMP + diphosphate. Functionally, catalyzes the formation of N(4)-acetylcytidine (ac(4)C) at the wobble position of elongator tRNA(Met), using acetate and ATP as substrates. First activates an acetate ion to form acetyladenylate (Ac-AMP) and then transfers the acetyl group to tRNA to form ac(4)C34. The polypeptide is tRNA(Met) cytidine acetate ligase (Streptococcus pyogenes serotype M49 (strain NZ131)).